The chain runs to 84 residues: Putative UPF0320 protein YNL337W (84 aa).

This sequence belongs to the UPF0320 family.

This Saccharomyces cerevisiae (strain ATCC 204508 / S288c) (Baker's yeast) protein is Putative UPF0320 protein YNL337W.